Consider the following 112-residue polypeptide: Large ribosomal subunit protein uL22 (112 aa).

Belongs to the universal ribosomal protein uL22 family. Part of the 50S ribosomal subunit.

In terms of biological role, this protein binds specifically to 23S rRNA; its binding is stimulated by other ribosomal proteins, e.g. L4, L17, and L20. It is important during the early stages of 50S assembly. It makes multiple contacts with different domains of the 23S rRNA in the assembled 50S subunit and ribosome. Its function is as follows. The globular domain of the protein is located near the polypeptide exit tunnel on the outside of the subunit, while an extended beta-hairpin is found that lines the wall of the exit tunnel in the center of the 70S ribosome. The polypeptide is Large ribosomal subunit protein uL22 (Nitratidesulfovibrio vulgaris (strain ATCC 29579 / DSM 644 / CCUG 34227 / NCIMB 8303 / VKM B-1760 / Hildenborough) (Desulfovibrio vulgaris)).